The sequence spans 297 residues: Guanylate kinase (297 aa).

The 180-residue stretch at 4 to 183 (GKMIIISGPS…AVAKITDVLH (180 aa)) folds into the Guanylate kinase-like domain. 11 to 18 (GPSGVGKG) provides a ligand contact to ATP. Positions 204–297 (EQIVKEKYMY…EQKHYNNDEF (94 aa)) are unknown.

It belongs to the guanylate kinase family.

The protein localises to the cytoplasm. The enzyme catalyses GMP + ATP = GDP + ADP. Functionally, essential for recycling GMP and indirectly, cGMP. This Mycoplasma capricolum subsp. capricolum (strain California kid / ATCC 27343 / NCTC 10154) protein is Guanylate kinase (gmk).